A 307-amino-acid polypeptide reads, in one-letter code: Methionyl-tRNA formyltransferase (307 aa).

108–111 (SLLP) is a binding site for (6S)-5,6,7,8-tetrahydrofolate.

Belongs to the Fmt family.

It catalyses the reaction L-methionyl-tRNA(fMet) + (6R)-10-formyltetrahydrofolate = N-formyl-L-methionyl-tRNA(fMet) + (6S)-5,6,7,8-tetrahydrofolate + H(+). Its function is as follows. Attaches a formyl group to the free amino group of methionyl-tRNA(fMet). The formyl group appears to play a dual role in the initiator identity of N-formylmethionyl-tRNA by promoting its recognition by IF2 and preventing the misappropriation of this tRNA by the elongation apparatus. The polypeptide is Methionyl-tRNA formyltransferase (Stenotrophomonas maltophilia (strain K279a)).